The sequence spans 121 residues: Large ribosomal subunit protein uL22 (121 aa).

It belongs to the universal ribosomal protein uL22 family. In terms of assembly, part of the 50S ribosomal subunit.

Its function is as follows. This protein binds specifically to 23S rRNA; its binding is stimulated by other ribosomal proteins, e.g. L4, L17, and L20. It is important during the early stages of 50S assembly. It makes multiple contacts with different domains of the 23S rRNA in the assembled 50S subunit and ribosome. Functionally, the globular domain of the protein is located near the polypeptide exit tunnel on the outside of the subunit, while an extended beta-hairpin is found that lines the wall of the exit tunnel in the center of the 70S ribosome. This chain is Large ribosomal subunit protein uL22, found in Micrococcus luteus (strain ATCC 4698 / DSM 20030 / JCM 1464 / CCM 169 / CCUG 5858 / IAM 1056 / NBRC 3333 / NCIMB 9278 / NCTC 2665 / VKM Ac-2230) (Micrococcus lysodeikticus).